A 135-amino-acid chain; its full sequence is C-type lectin BpLec (135 aa).

4 cysteine pairs are disulfide-bonded: cysteine 3–cysteine 14, cysteine 31–cysteine 131, cysteine 38–cysteine 133, and cysteine 106–cysteine 123. The 123-residue stretch at 10–132 (MNGLCYKIFD…CESKNAFLCQ (123 aa)) folds into the C-type lectin domain. Ca(2+) contacts are provided by glutamine 96, aspartate 98, glutamate 104, asparagine 119, and aspartate 120. The short motif at 96 to 98 (QPD) is the Galactose-binding element.

This sequence belongs to the true venom lectin family. As to quaternary structure, homodimer; disulfide-linked. As to expression, expressed by the venom gland.

It localises to the secreted. This lectin displays hemagglutinating activity on dog (128'000 HU/mg) and cat erythrocytes, that is inhibited by beta-galactosides (D-galactose, D-lactose, and N-acetyl-D-galactosamine) and EDTA. In addition, has been shown to hemagglutinate promastigote forms of Leishmania amazonensis. Also inhibits Gram-positive (S.aureus ATCC 25923) (MIC is 31.25 ug/ml) but not Gram-negative (E.coli ATCC 25922) bacteria. Is a calcium-dependent lectin. The protein is C-type lectin BpLec of Bothrops pauloensis (Neuwied's lancehead).